The chain runs to 419 residues: Gamma-glutamyl phosphate reductase (419 aa).

Belongs to the gamma-glutamyl phosphate reductase family.

It is found in the cytoplasm. It carries out the reaction L-glutamate 5-semialdehyde + phosphate + NADP(+) = L-glutamyl 5-phosphate + NADPH + H(+). Its pathway is amino-acid biosynthesis; L-proline biosynthesis; L-glutamate 5-semialdehyde from L-glutamate: step 2/2. Functionally, catalyzes the NADPH-dependent reduction of L-glutamate 5-phosphate into L-glutamate 5-semialdehyde and phosphate. The product spontaneously undergoes cyclization to form 1-pyrroline-5-carboxylate. This chain is Gamma-glutamyl phosphate reductase, found in Bordetella parapertussis (strain 12822 / ATCC BAA-587 / NCTC 13253).